Here is a 240-residue protein sequence, read N- to C-terminus: Orotidine 5'-phosphate decarboxylase (240 aa).

Substrate is bound by residues D16, K37, 64–73 (DLKFHDIPTT), T128, R190, Q199, G219, and R220. K66 serves as the catalytic Proton donor.

It belongs to the OMP decarboxylase family. Type 1 subfamily. In terms of assembly, homodimer.

The catalysed reaction is orotidine 5'-phosphate + H(+) = UMP + CO2. It participates in pyrimidine metabolism; UMP biosynthesis via de novo pathway; UMP from orotate: step 2/2. Catalyzes the decarboxylation of orotidine 5'-monophosphate (OMP) to uridine 5'-monophosphate (UMP). This chain is Orotidine 5'-phosphate decarboxylase, found in Prochlorococcus marinus (strain SARG / CCMP1375 / SS120).